The primary structure comprises 111 residues: MASIKFTTKDIFEQDFKIGFRGYDQDEVNDFLDDIMKDYDAYEAIIKELKGEIARLKAQAANSPKTTLPTEESNDVLRTERPSSATNFDILRRLNRLEKEVFGKQIVQDQE.

A coiled-coil region spans residues 32 to 63; sequence LDDIMKDYDAYEAIIKELKGEIARLKAQAANS. The tract at residues 59 to 80 is disordered; sequence QAANSPKTTLPTEESNDVLRTE. Positions 60–71 are enriched in polar residues; the sequence is AANSPKTTLPTE.

Belongs to the GpsB family. As to quaternary structure, forms polymers through the coiled coil domains. Interacts with PBP1, MreC and EzrA.

The protein localises to the cytoplasm. Functionally, divisome component that associates with the complex late in its assembly, after the Z-ring is formed, and is dependent on DivIC and PBP2B for its recruitment to the divisome. Together with EzrA, is a key component of the system that regulates PBP1 localization during cell cycle progression. Its main role could be the removal of PBP1 from the cell pole after pole maturation is completed. Also contributes to the recruitment of PBP1 to the division complex. Not essential for septum formation. The sequence is that of Cell cycle protein GpsB from Streptococcus suis (strain 98HAH33).